Here is a 144-residue protein sequence, read N- to C-terminus: Ribosome-binding factor A (144 aa).

Positions 121–144 (KAQTGVEEPLENTAEGEENPSGGE) are disordered. Over residues 128 to 138 (EPLENTAEGEE) the composition is skewed to acidic residues.

This sequence belongs to the RbfA family. Monomer. Binds 30S ribosomal subunits, but not 50S ribosomal subunits or 70S ribosomes.

Its subcellular location is the cytoplasm. In terms of biological role, one of several proteins that assist in the late maturation steps of the functional core of the 30S ribosomal subunit. Associates with free 30S ribosomal subunits (but not with 30S subunits that are part of 70S ribosomes or polysomes). Required for efficient processing of 16S rRNA. May interact with the 5'-terminal helix region of 16S rRNA. This is Ribosome-binding factor A from Synechococcus sp. (strain JA-2-3B'a(2-13)) (Cyanobacteria bacterium Yellowstone B-Prime).